The following is an 87-amino-acid chain: Antitoxin YefM (87 aa).

Belongs to the phD/YefM antitoxin family. Forms a complex with YoeB which inhibits its toxin activity.

In terms of biological role, antitoxin component of a type II toxin-antitoxin (TA) system. A probable antitoxin for the putative mRNA interferase YeoB. The polypeptide is Antitoxin YefM (Streptomyces coelicolor (strain ATCC BAA-471 / A3(2) / M145)).